Reading from the N-terminus, the 261-residue chain is Type II restriction enzyme Sau96I (261 aa).

Monomer.

The catalysed reaction is Endonucleolytic cleavage of DNA to give specific double-stranded fragments with terminal 5'-phosphates.. Functionally, a P subtype restriction enzyme that recognizes the double-stranded sequence 5'-GGNCC-3' and cleaves after G-1. The protein is Type II restriction enzyme Sau96I of Staphylococcus aureus.